The following is a 207-amino-acid chain: Ribosomal RNA small subunit methyltransferase G (207 aa).

S-adenosyl-L-methionine-binding positions include glycine 73, leucine 78, 124–125 (VE), and arginine 139.

Belongs to the methyltransferase superfamily. RNA methyltransferase RsmG family.

The protein localises to the cytoplasm. It carries out the reaction guanosine(527) in 16S rRNA + S-adenosyl-L-methionine = N(7)-methylguanosine(527) in 16S rRNA + S-adenosyl-L-homocysteine. Specifically methylates the N7 position of guanine in position 527 of 16S rRNA. The protein is Ribosomal RNA small subunit methyltransferase G of Enterobacter sp. (strain 638).